The primary structure comprises 578 residues: MAYRRKSAFKRAIDEDDVDIIRKLLSYKPIDLNKPGSKNRTILCRAVSMKSHKVAEFLLSNGSKMSACKVPPLIISVRNKDLTMAKILVSYGASVDVCYKGETPLLTAIKTGYIEIIDYLLSLEPSGPYPGHDMIYDKLTLESCSLLIKNNIRLDIPDRYGHTALYYAVKKGNLSLIKLLVENKAITDNIERIKILRRCIVTHYNIEVLKILSLDRDILGTEGTTALHYAVEAERLEAVRYLLDIGCDPKVLDEHSVSPLYYAIKRKNKIILDELIKFYTVEFMVNMDKRTLPLAMYYCSIDELKNLMHGIKDIALSEDYLSELLYESIKTNNPEIVSLILGLGANINKRDLYGNIPLQTAIIYQTDNVFNLLLQKGADVNAKNSDGNTILHTLAACCKYKKIKLVLDLGSDINSVNTNGRTPIEEACPCKKTIRTLISHLIIMIKKNKELIKDPLVIRSVSFINGIEYYKNIMLQCENELNELINQKLVRGYSLFDFVIEKDYNVIARFVNHPKLKVLKQTANVYKELADKNIGMSLTRYTLLERAVLTTEPYLHMLPLEIRSIICCFLSNNELEKL.

ANK repeat units follow at residues 4-34 (RRKS…DLNK), 38-67 (KNRT…KMSA), 68-97 (CKVP…SVDV), 100-129 (KGET…SGPY), 160-189 (YGHT…ITDN), 222-251 (EGTT…DPKV), 255-287 (HSVS…MVNM), 320-349 (YLSE…NINK), 353-382 (YGNI…DVNA), 386-415 (DGNT…DINS), and 419-449 (NGRT…KKNK).

The sequence is that of Putative ankyrin repeat protein FPV022 from Fowlpox virus (strain NVSL) (FPV).